A 271-amino-acid chain; its full sequence is tRNA pseudouridine synthase A (271 aa).

The active-site Nucleophile is the aspartate 52. Tyrosine 110 is a substrate binding site.

The protein belongs to the tRNA pseudouridine synthase TruA family. Homodimer.

The catalysed reaction is uridine(38/39/40) in tRNA = pseudouridine(38/39/40) in tRNA. Functionally, formation of pseudouridine at positions 38, 39 and 40 in the anticodon stem and loop of transfer RNAs. This chain is tRNA pseudouridine synthase A, found in Burkholderia mallei (strain NCTC 10247).